A 117-amino-acid polypeptide reads, in one-letter code: Peptidyl-tRNA hydrolase (117 aa).

It belongs to the PTH2 family.

It is found in the cytoplasm. It catalyses the reaction an N-acyl-L-alpha-aminoacyl-tRNA + H2O = an N-acyl-L-amino acid + a tRNA + H(+). Functionally, the natural substrate for this enzyme may be peptidyl-tRNAs which drop off the ribosome during protein synthesis. This is Peptidyl-tRNA hydrolase from Thermoplasma volcanium (strain ATCC 51530 / DSM 4299 / JCM 9571 / NBRC 15438 / GSS1).